The primary structure comprises 137 residues: Fluoride-specific ion channel FluC 1 (137 aa).

The next 4 helical transmembrane spans lie at Leu-4–Gly-24, Leu-37–Ile-57, Val-67–Val-87, and Ile-100–Tyr-120. Na(+) is bound by residues Gly-77 and Thr-80.

Belongs to the fluoride channel Fluc/FEX (TC 1.A.43) family.

It localises to the cell membrane. It carries out the reaction fluoride(in) = fluoride(out). With respect to regulation, na(+) is not transported, but it plays an essential structural role and its presence is essential for fluoride channel function. Functionally, fluoride-specific ion channel. Important for reducing fluoride concentration in the cell, thus reducing its toxicity. This chain is Fluoride-specific ion channel FluC 1, found in Bacillus thuringiensis subsp. konkukian (strain 97-27).